Here is a 273-residue protein sequence, read N- to C-terminus: Ribosomal RNA small subunit methyltransferase A (273 aa).

S-adenosyl-L-methionine-binding residues include N18, L20, G45, E66, D91, and N113.

It belongs to the class I-like SAM-binding methyltransferase superfamily. rRNA adenine N(6)-methyltransferase family. RsmA subfamily.

It is found in the cytoplasm. It carries out the reaction adenosine(1518)/adenosine(1519) in 16S rRNA + 4 S-adenosyl-L-methionine = N(6)-dimethyladenosine(1518)/N(6)-dimethyladenosine(1519) in 16S rRNA + 4 S-adenosyl-L-homocysteine + 4 H(+). Its function is as follows. Specifically dimethylates two adjacent adenosines (A1518 and A1519) in the loop of a conserved hairpin near the 3'-end of 16S rRNA in the 30S particle. May play a critical role in biogenesis of 30S subunits. The sequence is that of Ribosomal RNA small subunit methyltransferase A from Shigella dysenteriae serotype 1 (strain Sd197).